Reading from the N-terminus, the 504-residue chain is Anaerobic nitric oxide reductase transcription regulator NorR (504 aa).

At Asp-57 the chain carries 4-aspartylphosphate. In terms of domain architecture, Sigma-54 factor interaction spans 187–416; sequence MIGLSPGMTQ…LEHAIHRAVV (230 aa). ATP contacts are provided by residues 215–222 and 278–287; these read GETGTGKE and ADNGTLFLDE. Positions 479 to 498 form a DNA-binding region, H-T-H motif; it reads WAACARMLETDVANLHRLAK.

The protein operates within nitrogen metabolism; nitric oxide reduction. Required for the expression of anaerobic nitric oxide (NO) reductase, acts as a transcriptional activator for at least the norVW operon. Activation also requires sigma-54. This is Anaerobic nitric oxide reductase transcription regulator NorR from Escherichia coli O9:H4 (strain HS).